The primary structure comprises 377 residues: Cell division protein FtsZ (377 aa).

Acidic residues predominate over residues 1–16 (MDSIVDDAIDEAEDMG). The disordered stretch occupies residues 1 to 33 (MDSIVDDAIDEAEDMGDGSAEVGGPTDINRSGT). GTP-binding positions include 57-61 (GAGGN), 144-146 (GTG), glutamate 175, arginine 179, and aspartate 222.

It belongs to the FtsZ family. As to quaternary structure, homodimer. Polymerizes to form a dynamic ring structure in a strictly GTP-dependent manner. Interacts directly with several other division proteins.

The protein resides in the cytoplasm. Functionally, essential cell division protein that forms a contractile ring structure (Z ring) at the future cell division site. The regulation of the ring assembly controls the timing and the location of cell division. One of the functions of the FtsZ ring is to recruit other cell division proteins to the septum to produce a new cell wall between the dividing cells. Binds GTP and shows GTPase activity. The protein is Cell division protein FtsZ of Haloferax mediterranei (strain ATCC 33500 / DSM 1411 / JCM 8866 / NBRC 14739 / NCIMB 2177 / R-4) (Halobacterium mediterranei).